Reading from the N-terminus, the 469-residue chain is Aspartyl/glutamyl-tRNA(Asn/Gln) amidotransferase subunit B (469 aa).

This sequence belongs to the GatB/GatE family. GatB subfamily. In terms of assembly, heterotrimer of A, B and C subunits.

The catalysed reaction is L-glutamyl-tRNA(Gln) + L-glutamine + ATP + H2O = L-glutaminyl-tRNA(Gln) + L-glutamate + ADP + phosphate + H(+). The enzyme catalyses L-aspartyl-tRNA(Asn) + L-glutamine + ATP + H2O = L-asparaginyl-tRNA(Asn) + L-glutamate + ADP + phosphate + 2 H(+). Allows the formation of correctly charged Asn-tRNA(Asn) or Gln-tRNA(Gln) through the transamidation of misacylated Asp-tRNA(Asn) or Glu-tRNA(Gln) in organisms which lack either or both of asparaginyl-tRNA or glutaminyl-tRNA synthetases. The reaction takes place in the presence of glutamine and ATP through an activated phospho-Asp-tRNA(Asn) or phospho-Glu-tRNA(Gln). The polypeptide is Aspartyl/glutamyl-tRNA(Asn/Gln) amidotransferase subunit B (Methanococcus vannielii (strain ATCC 35089 / DSM 1224 / JCM 13029 / OCM 148 / SB)).